We begin with the raw amino-acid sequence, 471 residues long: Trigger factor (471 aa).

Residues 166 to 245 (DDFITIDINA…LTAVKVRELP (80 aa)) form the PPIase FKBP-type domain. The tract at residues 442–471 (AAGVTGEDDDTEAEEERVTVSADDPGAARF) is disordered. Positions 447-456 (GEDDDTEAEE) are enriched in acidic residues.

It belongs to the FKBP-type PPIase family. Tig subfamily.

It is found in the cytoplasm. It catalyses the reaction [protein]-peptidylproline (omega=180) = [protein]-peptidylproline (omega=0). In terms of biological role, involved in protein export. Acts as a chaperone by maintaining the newly synthesized protein in an open conformation. Functions as a peptidyl-prolyl cis-trans isomerase. The protein is Trigger factor of Renibacterium salmoninarum (strain ATCC 33209 / DSM 20767 / JCM 11484 / NBRC 15589 / NCIMB 2235).